Consider the following 200-residue polypeptide: Holliday junction resolvase RecU (200 aa).

Mg(2+)-binding residues include T82, D84, E97, and Q116.

This sequence belongs to the RecU family. Requires Mg(2+) as cofactor.

The protein resides in the cytoplasm. The catalysed reaction is Endonucleolytic cleavage at a junction such as a reciprocal single-stranded crossover between two homologous DNA duplexes (Holliday junction).. Endonuclease that resolves Holliday junction intermediates in genetic recombination. Cleaves mobile four-strand junctions by introducing symmetrical nicks in paired strands. Promotes annealing of linear ssDNA with homologous dsDNA. Required for DNA repair, homologous recombination and chromosome segregation. In Streptococcus gordonii (strain Challis / ATCC 35105 / BCRC 15272 / CH1 / DL1 / V288), this protein is Holliday junction resolvase RecU.